Here is a 320-residue protein sequence, read N- to C-terminus: D-amino-acid oxidase (320 aa).

Residues Ala-13, Gly-14, Val-15, Thr-42, Thr-43, Ser-44, Gly-48, and Ala-49 each contribute to the FAD site. Tyr-220 and Arg-274 together coordinate D-proline. D-serine-binding residues include Tyr-220 and Arg-274. The FAD site is built by Arg-274, Gly-299, Gly-300, Gly-302, and Thr-304. A D-proline-binding site is contributed by Gly-300. A D-serine-binding site is contributed by Gly-300.

It belongs to the DAMOX/DASOX family. FAD serves as cofactor.

Its subcellular location is the cytoplasm. The protein resides in the secreted. It is found in the cell wall. It carries out the reaction a D-alpha-amino acid + O2 + H2O = a 2-oxocarboxylate + H2O2 + NH4(+). Catalyzes the oxidative deamination of D-amino acids with broad substrate specificity. Enables the organism to utilize D-amino acids as a source of nutrients. Enables the organism to utilize glycine as a carbon source. In Mycobacterium tuberculosis (strain ATCC 25177 / H37Ra), this protein is D-amino-acid oxidase.